Here is a 261-residue protein sequence, read N- to C-terminus: Putative [LysW]-aminoadipate/[LysW]-glutamate kinase (261 aa).

Substrate is bound by residues 35–36 (GG), R62, and N162.

This sequence belongs to the acetylglutamate kinase family. LysZ subfamily.

It is found in the cytoplasm. It catalyses the reaction [amino-group carrier protein]-C-terminal-N-(1,4-dicarboxybutan-1-yl)-L-glutamine + ATP = [amino-group carrier protein]-C-terminal-N-(1-carboxy-5-phosphooxy-5-oxopentan-1-yl)-L-glutamine + ADP. The catalysed reaction is [amino-group carrier protein]-C-terminal-gamma-(L-glutamyl)-L-glutamate + ATP = [amino-group carrier protein]-C-terminal-gamma-(5-phospho-L-glutamyl)-L-glutamate + ADP. The protein operates within amino-acid biosynthesis; L-lysine biosynthesis via AAA pathway; L-lysine from L-alpha-aminoadipate (Thermus route): step 2/5. Its pathway is amino-acid biosynthesis; L-arginine biosynthesis. Functionally, involved in both the arginine and lysine biosynthetic pathways. Phosphorylates the LysW-bound precursors glutamate (for arginine biosynthesis), respectively alpha-aminoadipate (for lysine biosynthesis). This is Putative [LysW]-aminoadipate/[LysW]-glutamate kinase from Pyrobaculum aerophilum (strain ATCC 51768 / DSM 7523 / JCM 9630 / CIP 104966 / NBRC 100827 / IM2).